A 182-amino-acid polypeptide reads, in one-letter code: Adenine phosphoribosyltransferase 4 (182 aa).

This sequence belongs to the purine/pyrimidine phosphoribosyltransferase family. In terms of assembly, homodimer.

The protein localises to the cytoplasm. The enzyme catalyses AMP + diphosphate = 5-phospho-alpha-D-ribose 1-diphosphate + adenine. Its pathway is purine metabolism; AMP biosynthesis via salvage pathway; AMP from adenine: step 1/1. Functionally, catalyzes a salvage reaction resulting in the formation of AMP, that is energically less costly than de novo synthesis. May contribute to the recycling of adenine into adenylate nucleotides and the inactivation of cytokinins by phosphoribosylation. Possesses low activity toward adenine, but can efficiently convert cytokinins from free bases (active form) to the corresponding nucleotides (inactive form). The polypeptide is Adenine phosphoribosyltransferase 4 (APT4) (Arabidopsis thaliana (Mouse-ear cress)).